Here is an 84-residue protein sequence, read N- to C-terminus: Small ribosomal subunit protein bS20 (84 aa).

The protein belongs to the bacterial ribosomal protein bS20 family.

In terms of biological role, binds directly to 16S ribosomal RNA. This chain is Small ribosomal subunit protein bS20, found in Parabacteroides distasonis (strain ATCC 8503 / DSM 20701 / CIP 104284 / JCM 5825 / NCTC 11152).